Here is a 641-residue protein sequence, read N- to C-terminus: ATP-dependent zinc metalloprotease FtsH 2 (641 aa).

Topologically, residues 1–100 (MLAYYVSVNQ…IDVKVIHNFW (100 aa)) are periplasmic. The helical transmembrane segment at 101–121 (GQAFLSVLPFLLFILALYFLF) threads the bilayer. Over 122-641 (RQQIRMAGRG…LLPGLEGAPA (520 aa)) the chain is Cytoplasmic. 193–200 (GPPGTGKT) contacts ATP. His-415 lines the Zn(2+) pocket. Glu-416 is an active-site residue. His-419 and Asp-491 together coordinate Zn(2+). The segment at 593-641 (KTGKMTNPPSKNSSPVSNGGEASSTKSPARQEETTKDGGLLPGLEGAPA) is disordered. 2 stretches are compositionally biased toward low complexity: residues 599 to 610 (NPPSKNSSPVSN) and 630 to 641 (GGLLPGLEGAPA).

This sequence in the central section; belongs to the AAA ATPase family. In the C-terminal section; belongs to the peptidase M41 family. Homohexamer. Zn(2+) serves as cofactor.

It localises to the cell inner membrane. Its function is as follows. Acts as a processive, ATP-dependent zinc metallopeptidase for both cytoplasmic and membrane proteins. Plays a role in the quality control of integral membrane proteins. This Methylacidiphilum infernorum (isolate V4) (Methylokorus infernorum (strain V4)) protein is ATP-dependent zinc metalloprotease FtsH 2.